We begin with the raw amino-acid sequence, 149 residues long: uncharacterized protein (149 aa).

Disordered regions lie at residues 24 to 74 (TSQG…NDLE) and 129 to 149 (AIQDDAGIPNPEMPKSAPRAP). Residues 28 to 42 (EDVKPEPKPEVDEKV) are compositionally biased toward basic and acidic residues. Residues 102–131 (SELESLKEKVSSATSMEELREIMEEFRAIQ) are a coiled coil.

This is an uncharacterized protein from Archaeoglobus fulgidus (strain ATCC 49558 / DSM 4304 / JCM 9628 / NBRC 100126 / VC-16).